A 353-amino-acid chain; its full sequence is RNA 3'-terminal phosphate cyclase (353 aa).

Residues Gln-103 and 297–301 (HLADQ) each bind ATP. Catalysis depends on His-322, which acts as the Tele-AMP-histidine intermediate.

This sequence belongs to the RNA 3'-terminal cyclase family. Type 1 subfamily.

The protein localises to the cytoplasm. The enzyme catalyses a 3'-end 3'-phospho-ribonucleotide-RNA + ATP = a 3'-end 2',3'-cyclophospho-ribonucleotide-RNA + AMP + diphosphate. Catalyzes the conversion of 3'-phosphate to a 2',3'-cyclic phosphodiester at the end of RNA. The mechanism of action of the enzyme occurs in 3 steps: (A) adenylation of the enzyme by ATP; (B) transfer of adenylate to an RNA-N3'P to produce RNA-N3'PP5'A; (C) and attack of the adjacent 2'-hydroxyl on the 3'-phosphorus in the diester linkage to produce the cyclic end product. The biological role of this enzyme is unknown but it is likely to function in some aspects of cellular RNA processing. The protein is RNA 3'-terminal phosphate cyclase of Salmonella heidelberg (strain SL476).